We begin with the raw amino-acid sequence, 283 residues long: Elongation factor Ts (283 aa).

An involved in Mg(2+) ion dislocation from EF-Tu region spans residues 79–82 (TDFV).

This sequence belongs to the EF-Ts family.

Its subcellular location is the cytoplasm. Associates with the EF-Tu.GDP complex and induces the exchange of GDP to GTP. It remains bound to the aminoacyl-tRNA.EF-Tu.GTP complex up to the GTP hydrolysis stage on the ribosome. This chain is Elongation factor Ts, found in Shewanella oneidensis (strain ATCC 700550 / JCM 31522 / CIP 106686 / LMG 19005 / NCIMB 14063 / MR-1).